A 391-amino-acid polypeptide reads, in one-letter code: D-alanine--D-alanine ligase (391 aa).

The disordered stretch occupies residues 1-24; sequence MSSENLPQSPERAESPQAPRRKPR. One can recognise an ATP-grasp domain in the interval 171 to 381; the sequence is KRVFLSFGLP…YPELVDRLIQ (211 aa). ATP is bound at residue 207 to 262; the sequence is AGEHGWPLFIKPARGGSSMGITKVDSVEGLDAAIEEARRHDPKFLVESLLRGREIE. Aspartate 335, glutamate 348, and asparagine 350 together coordinate Mg(2+).

Belongs to the D-alanine--D-alanine ligase family. Mg(2+) serves as cofactor. The cofactor is Mn(2+).

The protein localises to the cytoplasm. The enzyme catalyses 2 D-alanine + ATP = D-alanyl-D-alanine + ADP + phosphate + H(+). It participates in cell wall biogenesis; peptidoglycan biosynthesis. Functionally, cell wall formation. The polypeptide is D-alanine--D-alanine ligase (Streptomyces griseus subsp. griseus (strain JCM 4626 / CBS 651.72 / NBRC 13350 / KCC S-0626 / ISP 5235)).